A 571-amino-acid chain; its full sequence is Putative F-box protein At5g39460 (571 aa).

Residues 9 to 55 (ACLLLTLPEDVFAVISRFLSPSDICNLILCGKSLCALVDSEKTWLVQ) enclose the F-box domain.

The sequence is that of Putative F-box protein At5g39460 from Arabidopsis thaliana (Mouse-ear cress).